Reading from the N-terminus, the 119-residue chain is NADH-quinone oxidoreductase subunit A (119 aa).

The next 3 helical transmembrane spans lie at 9–29 (IFLF…LGYI), 63–83 (LVAI…PWAV), and 88–108 (IGAL…VGFI).

Belongs to the complex I subunit 3 family. NDH-1 is composed of 14 different subunits. Subunits NuoA, H, J, K, L, M, N constitute the membrane sector of the complex.

It localises to the cell inner membrane. It carries out the reaction a quinone + NADH + 5 H(+)(in) = a quinol + NAD(+) + 4 H(+)(out). Its function is as follows. NDH-1 shuttles electrons from NADH, via FMN and iron-sulfur (Fe-S) centers, to quinones in the respiratory chain. The immediate electron acceptor for the enzyme in this species is believed to be ubiquinone. Couples the redox reaction to proton translocation (for every two electrons transferred, four hydrogen ions are translocated across the cytoplasmic membrane), and thus conserves the redox energy in a proton gradient. The sequence is that of NADH-quinone oxidoreductase subunit A from Albidiferax ferrireducens (strain ATCC BAA-621 / DSM 15236 / T118) (Rhodoferax ferrireducens).